We begin with the raw amino-acid sequence, 88 residues long: Small ribosomal subunit protein uS17 (88 aa).

It belongs to the universal ribosomal protein uS17 family. As to quaternary structure, part of the 30S ribosomal subunit.

One of the primary rRNA binding proteins, it binds specifically to the 5'-end of 16S ribosomal RNA. This chain is Small ribosomal subunit protein uS17, found in Oleidesulfovibrio alaskensis (strain ATCC BAA-1058 / DSM 17464 / G20) (Desulfovibrio alaskensis).